The following is a 383-amino-acid chain: Lipid-A-disaccharide synthase (383 aa).

The protein belongs to the LpxB family.

It carries out the reaction a lipid X + a UDP-2-N,3-O-bis[(3R)-3-hydroxyacyl]-alpha-D-glucosamine = a lipid A disaccharide + UDP + H(+). It participates in bacterial outer membrane biogenesis; LPS lipid A biosynthesis. Condensation of UDP-2,3-diacylglucosamine and 2,3-diacylglucosamine-1-phosphate to form lipid A disaccharide, a precursor of lipid A, a phosphorylated glycolipid that anchors the lipopolysaccharide to the outer membrane of the cell. The polypeptide is Lipid-A-disaccharide synthase (Anaeromyxobacter sp. (strain K)).